The sequence spans 373 residues: Protein CAF40 (373 aa).

Positions 1-91 (MFSAQKPIYG…ANATRNNPNM (91 aa)) are disordered. Over residues 11–22 (NGAGVNMGGGGP) the composition is skewed to gly residues. A compositionally biased stretch (low complexity) spans 50–88 (GGPMLMGNTPNNNNSNENGENNGNNGNNGGNDANATRNN).

It belongs to the CNOT9 family. As to quaternary structure, subunit of the 1.0 MDa CCR4-NOT core complex that contains CCR4, CAF1, NOT1, NOT2, NOT3, NOT4, NOT5, CAF40 and CAF130. In the complex interacts with NOT1. The core complex probably is part of a less characterized 1.9 MDa CCR4-NOT complex.

The protein resides in the cytoplasm. It localises to the nucleus. Acts as a component of the CCR4-NOT core complex, which in the nucleus seems to be a general transcription factor, and in the cytoplasm the major mRNA deadenylase involved in mRNA turnover. The sequence is that of Protein CAF40 (CAF40) from Saccharomyces cerevisiae (strain ATCC 204508 / S288c) (Baker's yeast).